We begin with the raw amino-acid sequence, 259 residues long: Ubiquitin-conjugating enzyme E2 J2 (259 aa).

At 1 to 226 (MSSTSSKRAP…AGLQQANRHH (226 aa)) the chain is on the cytoplasmic side. The UBC core domain maps to 12–162 (TATQRLKQDY…DKVFCELFPE (151 aa)). Cys94 acts as the Glycyl thioester intermediate in catalysis. A helical; Anchor for type IV membrane protein transmembrane segment spans residues 227 to 247 (GLLGGALANLFVIVGFAAFAY). The Lumenal segment spans residues 248–259 (TVKYVLRSIAQE).

It belongs to the ubiquitin-conjugating enzyme family. In terms of processing, auto-ubiquitinated.

It localises to the endoplasmic reticulum membrane. It carries out the reaction S-ubiquitinyl-[E1 ubiquitin-activating enzyme]-L-cysteine + [E2 ubiquitin-conjugating enzyme]-L-cysteine = [E1 ubiquitin-activating enzyme]-L-cysteine + S-ubiquitinyl-[E2 ubiquitin-conjugating enzyme]-L-cysteine.. The protein operates within protein modification; protein ubiquitination. Catalyzes the covalent attachment of ubiquitin to other proteins. Seems to function in the selective degradation of misfolded membrane proteins from the endoplasmic reticulum (ERAD). In cooperation with the GATOR2 complex, catalyzes 'Lys-6'-linked ubiquitination of NPRL2. The sequence is that of Ubiquitin-conjugating enzyme E2 J2 (UBE2J2) from Homo sapiens (Human).